A 181-amino-acid polypeptide reads, in one-letter code: Inner membrane-spanning protein YciB (181 aa).

A run of 5 helical transmembrane segments spans residues 24-44 (SATA…WLRH), 49-69 (NMLW…LILQ), 81-101 (LYWL…KNLI), 119-139 (LNIS…YVAY), and 149-169 (FKLF…ALLL).

The protein belongs to the YciB family.

The protein localises to the cell inner membrane. Its function is as follows. Plays a role in cell envelope biogenesis, maintenance of cell envelope integrity and membrane homeostasis. This Nitrosomonas eutropha (strain DSM 101675 / C91 / Nm57) protein is Inner membrane-spanning protein YciB.